We begin with the raw amino-acid sequence, 559 residues long: Leucine-rich repeat protein soc-2 (559 aa).

Positions 1–17 (METSKEFEFRPAKETSR) are enriched in basic and acidic residues. Residues 1 to 55 (METSKEFEFRPAKETSRSKSPGGIVGRLSNFARNKARHSLSEKGSNSVGGSGGSG) form a disordered region. 20 LRR repeats span residues 74–95 (QDQR…IKEL), 97–118 (QLTE…IGQL), 120–141 (NLKK…LSSL), 143–164 (SLET…IYKI), 166–187 (SLET…IGNL), 189–210 (KLKM…IGKL), 212–233 (SLVV…IGEC), 235–257 (ALTQ…GKLT), 258–279 (NLVR…LESC), 281–302 (QLEE…LLTM), 305–326 (KIHT…GPQQ), 329–350 (PTVT…IFSK), 353–374 (RLTK…MGSW), 376–397 (SITE…IEKL), 399–420 (NLEI…IGNL), 422–443 (KLRE…IGFL), 445–466 (HLTK…IGNL), 468–489 (SLQD…IGHL), 491–513 (SLKS…LALC), and 515–536 (SLEI…ITAG).

Belongs to the SHOC2 family. As to quaternary structure, interacts with let-60.

In terms of biological role, acts as a Ras effector and participates in MAPK pathway activation. Probably acts as a scaffolding protein in a protein phosphatase complex that specifically dephosphorylates Raf kinase and stimulates Raf activity at specialized signaling complexes upon Ras activation. Required for vulval development. Involved in fluid homeostasis. Plays a role in nicotinic acetylcholine receptor (nAChR)-mediated sensitivity to nicotine. This Caenorhabditis briggsae protein is Leucine-rich repeat protein soc-2 (soc-2).